A 432-amino-acid polypeptide reads, in one-letter code: MHVVVLGSGVVGVASAWYLRQAGHEVTVIDREPGPALETSAANAGQISPGYAAPWAAPGVPLKAIKWMFQRHAPLAISLDGTHFQLKWMWQMLRNCDTRHYMQNKGRMVRLAEYSRDCLKALRESTGIQYEGRQGGTLQLFRTEQQYENASRDIAVLESEGVPFRLLKAAELAQVEPALADVAHKLTGGLQLPNDETGDCQLFTTRLAQMAEAAGVVFRYNTPVDRLLSEGQRIYGVKCGDEVIKADGYVMAFGSYSTAMLKGIVDIPVYPLKGYSLTIPIADESGAPVSTVLDETYKIAITRFDNRIRVGGMAEIVGFNTELLKPRQETLEMVVRDLYPRGGHIEQAKFWTGLRPMTPDGTPVVGRTEFKNLWLNTGHGTLGWTMACGSGQLLSDIISGRTPAIPFEDLSVARYAPGFTPSSSHRLHGAHP.

3 to 17 is a binding site for FAD; sequence VVVLGSGVVGVASAW.

The protein belongs to the DadA oxidoreductase family. Requires FAD as cofactor.

The catalysed reaction is a D-alpha-amino acid + A + H2O = a 2-oxocarboxylate + AH2 + NH4(+). It functions in the pathway amino-acid degradation; D-alanine degradation; NH(3) and pyruvate from D-alanine: step 1/1. Functionally, oxidative deamination of D-amino acids. This is D-amino acid dehydrogenase from Cronobacter sakazakii (strain ATCC BAA-894) (Enterobacter sakazakii).